The sequence spans 317 residues: Phosphopantothenate--cysteine ligase 1 (317 aa).

It belongs to the PPC synthetase family. Homodimer.

It catalyses the reaction (R)-4'-phosphopantothenate + L-cysteine + ATP = N-[(R)-4-phosphopantothenoyl]-L-cysteine + AMP + diphosphate + H(+). Its pathway is cofactor biosynthesis; coenzyme A biosynthesis; CoA from (R)-pantothenate: step 2/5. Catalyzes the first step in the biosynthesis of coenzyme A from vitamin B5/pantothenate, where cysteine is conjugated to 4'-phosphopantothenate to form 4-phosphopantothenoylcysteine. The catalytic activity is not CTP- but ATP-dependent. This Arabidopsis thaliana (Mouse-ear cress) protein is Phosphopantothenate--cysteine ligase 1 (PPCS1).